The following is a 461-amino-acid chain: Transcriptional activator RocR (461 aa).

Asp-57 carries the post-translational modification 4-aspartylphosphate. A Sigma-54 factor interaction domain is found at 143 to 372; sequence ILGTSPAIQD…EHMIEGAMNF (230 aa). Residues 171–178 and 233–242 contribute to the ATP site; these read GETGTGKE and AHGGTLLLDE. Positions 434–453 form a DNA-binding region, H-T-H motif; that stretch reads ISKAAQELGISRQSLQYRLK.

Its function is as follows. Positive regulator of arginine catabolism. Controls the transcription of the two operons rocABC and rocDEF and probably acts by binding to the corresponding upstream activating sequences. This Bacillus subtilis (strain 168) protein is Transcriptional activator RocR (rocR).